Here is a 129-residue protein sequence, read N- to C-terminus: Small ribosomal subunit protein uS8 (129 aa).

This sequence belongs to the universal ribosomal protein uS8 family. In terms of assembly, part of the 30S ribosomal subunit.

Functionally, one of the primary rRNA binding proteins, it binds directly to 16S rRNA central domain where it helps coordinate assembly of the platform of the 30S subunit. This chain is Small ribosomal subunit protein uS8, found in Nanoarchaeum equitans (strain Kin4-M).